The sequence spans 540 residues: Chaperonin GroEL (540 aa).

ATP is bound by residues 29 to 32 (TLGP), 86 to 90 (DGTTT), glycine 413, and aspartate 493. A disordered region spans residues 520–540 (AEKPEPKPAPGPADPGAGMDF).

The protein belongs to the chaperonin (HSP60) family. As to quaternary structure, forms a cylinder of 14 subunits composed of two heptameric rings stacked back-to-back. Interacts with the co-chaperonin GroES.

It is found in the cytoplasm. It catalyses the reaction ATP + H2O + a folded polypeptide = ADP + phosphate + an unfolded polypeptide.. Its function is as follows. Together with its co-chaperonin GroES, plays an essential role in assisting protein folding. The GroEL-GroES system forms a nano-cage that allows encapsulation of the non-native substrate proteins and provides a physical environment optimized to promote and accelerate protein folding. In Tropheryma whipplei (Whipple's bacillus), this protein is Chaperonin GroEL.